The primary structure comprises 361 residues: S-adenosylmethionine decarboxylase proenzyme (361 aa).

Active-site residues include glutamate 13 and glutamate 16. Serine 73 functions as the Schiff-base intermediate with substrate; via pyruvic acid in the catalytic mechanism. Pyruvic acid (Ser); by autocatalysis is present on serine 73. Cysteine 87 acts as the Proton donor; for catalytic activity in catalysis. Residues serine 236 and histidine 249 each act as proton acceptor; for processing activity in the active site.

Belongs to the eukaryotic AdoMetDC family. Pyruvate is required as a cofactor. In terms of processing, is synthesized initially as an inactive proenzyme. Formation of the active enzyme involves a self-maturation process in which the active site pyruvoyl group is generated from an internal serine residue via an autocatalytic post-translational modification. Two non-identical subunits are generated from the proenzyme in this reaction, and the pyruvate is formed at the N-terminus of the alpha chain, which is derived from the carboxyl end of the proenzyme. The post-translation cleavage follows an unusual pathway, termed non-hydrolytic serinolysis, in which the side chain hydroxyl group of the serine supplies its oxygen atom to form the C-terminus of the beta chain, while the remainder of the serine residue undergoes an oxidative deamination to produce ammonia and the pyruvoyl group blocking the N-terminus of the alpha chain.

It catalyses the reaction S-adenosyl-L-methionine + H(+) = S-adenosyl 3-(methylsulfanyl)propylamine + CO2. Its pathway is amine and polyamine biosynthesis; S-adenosylmethioninamine biosynthesis; S-adenosylmethioninamine from S-adenosyl-L-methionine: step 1/1. The sequence is that of S-adenosylmethionine decarboxylase proenzyme (SAMDC1) from Nicotiana sylvestris (Wood tobacco).